The primary structure comprises 474 residues: Methylenetetrahydrofolate--tRNA-(uracil-5-)-methyltransferase TrmFO (474 aa).

15 to 20 (GAGLAG) contributes to the FAD binding site. The tract at residues 453-474 (PLLPTAPDTTGAAGEETTQAES) is disordered.

Belongs to the MnmG family. TrmFO subfamily. It depends on FAD as a cofactor.

Its subcellular location is the cytoplasm. The catalysed reaction is uridine(54) in tRNA + (6R)-5,10-methylene-5,6,7,8-tetrahydrofolate + NADH + H(+) = 5-methyluridine(54) in tRNA + (6S)-5,6,7,8-tetrahydrofolate + NAD(+). It catalyses the reaction uridine(54) in tRNA + (6R)-5,10-methylene-5,6,7,8-tetrahydrofolate + NADPH + H(+) = 5-methyluridine(54) in tRNA + (6S)-5,6,7,8-tetrahydrofolate + NADP(+). Functionally, catalyzes the folate-dependent formation of 5-methyl-uridine at position 54 (M-5-U54) in all tRNAs. The protein is Methylenetetrahydrofolate--tRNA-(uracil-5-)-methyltransferase TrmFO of Nitratidesulfovibrio vulgaris (strain ATCC 29579 / DSM 644 / CCUG 34227 / NCIMB 8303 / VKM B-1760 / Hildenborough) (Desulfovibrio vulgaris).